The chain runs to 647 residues: MINITFPDGAVREFESGVTTFEIAQSISNSLAKKALAGKFNGKLIDTTRAITEDGSIEIVTPDHEDALPILRHSAAHLFAQAARRLFPDIHLGVGPAIEDGFYYDTDNTAGQISNEDLPRIEEEMQKIVKENFPSIREEVTKDEAREIFKNDPYKLELIEEHSEDEGGLTIYRQGEYVDLCRGPHVPSTGRIQIFHLLHVAGAYWRGNSDNAMMQRIYGTAWFEKKDLKNYLQMREEAKERDHRKLGKELDLFMISQEVGQGLPFWLPNGATIRRELERYIVNKELASGYQHVYTPPLASVELYKTSGHWDHYQEDMFPTMDMGDGEEFVLRPMNCPHHIQVFKHHVHSYRELPIRIAEIGMMHRYEKSGALTGLQRVREMSLNDGHLFVTPEQIQEEFQRALQLIIDVYEDFNLTDYRFRLSLRDPQDTHKYFDNDEMWENAQTMLRAALDEMGVDYFEAEGEAAFYGPKLDIQIKTALGKEETLSTIQLDFLLPERFDLKYIGADGEDHRPVMIHRGVISTMERFTAILIENYKGAFPTWLAPHQVTLIPVSNEKHVDYAWEVAKKLRDRGVRADVDERNEKMQFKIRASQTSKIPYQLIVGDKEMEDETVNVRRYGQKETQTVSVDNFVQAILADIANKSRVEK.

The region spanning 1 to 61 (MINITFPDGA…TEDGSIEIVT (61 aa)) is the TGS domain. Residues 242-540 (DHRKLGKELD…LIENYKGAFP (299 aa)) are catalytic. Positions 336, 387, and 517 each coordinate Zn(2+).

This sequence belongs to the class-II aminoacyl-tRNA synthetase family. In terms of assembly, homodimer. It depends on Zn(2+) as a cofactor.

It localises to the cytoplasm. It carries out the reaction tRNA(Thr) + L-threonine + ATP = L-threonyl-tRNA(Thr) + AMP + diphosphate + H(+). In terms of biological role, catalyzes the attachment of threonine to tRNA(Thr) in a two-step reaction: L-threonine is first activated by ATP to form Thr-AMP and then transferred to the acceptor end of tRNA(Thr). Also edits incorrectly charged L-seryl-tRNA(Thr). This chain is Threonine--tRNA ligase, found in Streptococcus pneumoniae (strain JJA).